A 163-amino-acid polypeptide reads, in one-letter code: 2-C-methyl-D-erythritol 2,4-cyclodiphosphate synthase (163 aa).

A divalent metal cation is bound by residues Asp-15 and His-17. Residues 15-17 and 41-42 each bind 4-CDP-2-C-methyl-D-erythritol 2-phosphate; these read DFH and HS. Residue His-49 coordinates a divalent metal cation. 4-CDP-2-C-methyl-D-erythritol 2-phosphate contacts are provided by residues 63–65 and 139–142; these read DIG and TTNE.

This sequence belongs to the IspF family. In terms of assembly, homotrimer. The cofactor is a divalent metal cation.

It carries out the reaction 4-CDP-2-C-methyl-D-erythritol 2-phosphate = 2-C-methyl-D-erythritol 2,4-cyclic diphosphate + CMP. Its pathway is isoprenoid biosynthesis; isopentenyl diphosphate biosynthesis via DXP pathway; isopentenyl diphosphate from 1-deoxy-D-xylulose 5-phosphate: step 4/6. Involved in the biosynthesis of isopentenyl diphosphate (IPP) and dimethylallyl diphosphate (DMAPP), two major building blocks of isoprenoid compounds. Catalyzes the conversion of 4-diphosphocytidyl-2-C-methyl-D-erythritol 2-phosphate (CDP-ME2P) to 2-C-methyl-D-erythritol 2,4-cyclodiphosphate (ME-CPP) with a corresponding release of cytidine 5-monophosphate (CMP). This chain is 2-C-methyl-D-erythritol 2,4-cyclodiphosphate synthase, found in Gloeobacter violaceus (strain ATCC 29082 / PCC 7421).